A 57-amino-acid polypeptide reads, in one-letter code: Large ribosomal subunit protein bL32 (57 aa).

The segment at 1 to 23 (MAVPKKRTSKTRTNRRRAQKKAR) is disordered.

Belongs to the bacterial ribosomal protein bL32 family.

In Natranaerobius thermophilus (strain ATCC BAA-1301 / DSM 18059 / JW/NM-WN-LF), this protein is Large ribosomal subunit protein bL32.